The primary structure comprises 343 residues: Dihydroorotase (343 aa).

Zn(2+) contacts are provided by H14 and H16. Residues 16–18 and N42 contribute to the substrate site; that span reads HLR. Residues K100, H137, and H175 each contribute to the Zn(2+) site. N6-carboxylysine is present on K100. Position 137 (H137) interacts with substrate. L220 provides a ligand contact to substrate. Residue D248 coordinates Zn(2+). D248 is a catalytic residue. Substrate-binding residues include H252 and A264.

This sequence belongs to the metallo-dependent hydrolases superfamily. DHOase family. Class II DHOase subfamily. Homodimer. The cofactor is Zn(2+).

The enzyme catalyses (S)-dihydroorotate + H2O = N-carbamoyl-L-aspartate + H(+). Its pathway is pyrimidine metabolism; UMP biosynthesis via de novo pathway; (S)-dihydroorotate from bicarbonate: step 3/3. Functionally, catalyzes the reversible cyclization of carbamoyl aspartate to dihydroorotate. The protein is Dihydroorotase of Parasynechococcus marenigrum (strain WH8102).